A 625-amino-acid polypeptide reads, in one-letter code: Beta-galactosidase large subunit (625 aa).

The Proton donor role is filled by glutamate 465. Glutamate 533 functions as the Nucleophile in the catalytic mechanism.

The protein belongs to the glycosyl hydrolase 2 family. As to quaternary structure, heterodimer of a large (LacL) and a small subunit (LacM).

It catalyses the reaction Hydrolysis of terminal non-reducing beta-D-galactose residues in beta-D-galactosides.. Functionally, component of a beta-galactosidase. The polypeptide is Beta-galactosidase large subunit (Latilactobacillus sakei (Lactobacillus sakei)).